Here is a 156-residue protein sequence, read N- to C-terminus: Ribosome maturation factor RimP (156 aa).

It belongs to the RimP family.

The protein resides in the cytoplasm. Functionally, required for maturation of 30S ribosomal subunits. In Prochlorococcus marinus (strain NATL1A), this protein is Ribosome maturation factor RimP.